Reading from the N-terminus, the 368-residue chain is N-succinylamino acid racemase (368 aa).

2-succinylbenzoate-binding positions include serine 135 and 161–163; that span reads KLK. Lysine 163 serves as the catalytic Proton donor. Aspartate 189 contacts Mg(2+). Position 191 (asparagine 191) interacts with 2-succinylbenzoate. The Mg(2+) site is built by glutamate 214 and aspartate 239. The active-site Proton acceptor is lysine 263. Isoleucine 293 contributes to the 2-succinylbenzoate binding site.

The protein belongs to the mandelate racemase/muconate lactonizing enzyme family. MenC type 2 subfamily. In terms of assembly, homooctamer. The cofactor is a divalent metal cation.

It carries out the reaction N-acetyl-D-methionine = N-acetyl-L-methionine. The catalysed reaction is (1R,6R)-6-hydroxy-2-succinyl-cyclohexa-2,4-diene-1-carboxylate = 2-succinylbenzoate + H2O. Inhibited by EDTA and sulfhydryl reagents such as p-chloromercuribenzoic acid. Both OSBS and NAAAR activities are inhibited competitively by salicylhydroxamate. Its function is as follows. Acts as a N-succinylamino acid racemase (NSAR) that catalyzes the racemization of N-succinyl-phenylglycine and N-succinyl-methionine. Can catalyze the racemization of a broad range of N-acylamino acids, including N-acetyl-D/L-methionine, N-propionyl-D/L-methionine, N-butyryl-D/L-methionine and N-chloroacetyl-L-valine. Also converts 2-succinyl-6-hydroxy-2,4-cyclohexadiene-1-carboxylate (SHCHC) to 2-succinylbenzoate (OSB). Catalyzes both N-succinylamino acid racemization and OSB synthesis at equivalent rates. NSAR is probably the biological function of this enzyme. The polypeptide is N-succinylamino acid racemase (Amycolatopsis sp).